The primary structure comprises 145 residues: Methylglyoxal synthase (145 aa).

In terms of domain architecture, MGS-like spans 1–145 (MNSKKKIALV…YYQKIRKDNF (145 aa)). Substrate is bound by residues histidine 12, lysine 16, 38–41 (TGTT), and 58–59 (SG). The Proton donor/acceptor role is filled by aspartate 64. Histidine 91 contributes to the substrate binding site.

It belongs to the methylglyoxal synthase family.

The enzyme catalyses dihydroxyacetone phosphate = methylglyoxal + phosphate. Catalyzes the formation of methylglyoxal from dihydroxyacetone phosphate. In Clostridium acetobutylicum (strain ATCC 824 / DSM 792 / JCM 1419 / IAM 19013 / LMG 5710 / NBRC 13948 / NRRL B-527 / VKM B-1787 / 2291 / W), this protein is Methylglyoxal synthase.